A 261-amino-acid polypeptide reads, in one-letter code: Auxin-responsive protein IAA10 (261 aa).

The interval 1-43 is disordered; the sequence is MNGLQEVCSSSGSVMIGLPAEEDENAAHSSEDSSCPDESVSET. Residues 45–49 carry the EAR-like (transcriptional repression) motif; sequence LDLAL. Residues 62–90 form a disordered region; that stretch reads LSSSSSSLTRESGTKRSADSSPAAASNAT. Low complexity predominate over residues 80 to 89; the sequence is DSSPAAASNA. Positions 151-253 constitute a PB1 domain; the sequence is SMLVKVTMDG…SVTRLRIMKT (103 aa).

This sequence belongs to the Aux/IAA family. In terms of assembly, homodimers and heterodimers. Preferentially expressed in vegetative organs.

The protein localises to the nucleus. In terms of biological role, aux/IAA proteins are short-lived transcriptional factors that function as repressors of early auxin response genes at low auxin concentrations. Repression is thought to result from the interaction with auxin response factors (ARFs), proteins that bind to the auxin-responsive promoter element (AuxRE). Formation of heterodimers with ARF proteins may alter their ability to modulate early auxin response genes expression. This chain is Auxin-responsive protein IAA10 (IAA10), found in Arabidopsis thaliana (Mouse-ear cress).